Consider the following 101-residue polypeptide: Large ribosomal subunit protein uL23 (101 aa).

It belongs to the universal ribosomal protein uL23 family. As to quaternary structure, part of the 50S ribosomal subunit. Contacts protein L29, and trigger factor when it is bound to the ribosome.

One of the early assembly proteins it binds 23S rRNA. One of the proteins that surrounds the polypeptide exit tunnel on the outside of the ribosome. Forms the main docking site for trigger factor binding to the ribosome. This chain is Large ribosomal subunit protein uL23, found in Lactobacillus helveticus (strain DPC 4571).